Consider the following 22-residue polypeptide: NADH-ubiquinone oxidoreductase 16 kDa subunit (22 aa).

In terms of assembly, complex I is composed of about 45 different subunits.

It is found in the mitochondrion inner membrane. The enzyme catalyses a ubiquinone + NADH + 5 H(+)(in) = a ubiquinol + NAD(+) + 4 H(+)(out). In terms of biological role, transfer of electrons from NADH to the respiratory chain. The immediate electron acceptor for the enzyme is believed to be ubiquinone. The chain is NADH-ubiquinone oxidoreductase 16 kDa subunit from Solanum tuberosum (Potato).